Consider the following 268-residue polypeptide: Tryptophan synthase alpha chain (268 aa).

Catalysis depends on proton acceptor residues Glu49 and Asp60.

This sequence belongs to the TrpA family. As to quaternary structure, tetramer of two alpha and two beta chains.

The enzyme catalyses (1S,2R)-1-C-(indol-3-yl)glycerol 3-phosphate + L-serine = D-glyceraldehyde 3-phosphate + L-tryptophan + H2O. Its pathway is amino-acid biosynthesis; L-tryptophan biosynthesis; L-tryptophan from chorismate: step 5/5. Its function is as follows. The alpha subunit is responsible for the aldol cleavage of indoleglycerol phosphate to indole and glyceraldehyde 3-phosphate. This is Tryptophan synthase alpha chain from Escherichia coli O139:H28 (strain E24377A / ETEC).